Here is a 393-residue protein sequence, read N- to C-terminus: NADH-quinone oxidoreductase subunit D (393 aa).

The protein belongs to the complex I 49 kDa subunit family. In terms of assembly, NDH-1 is composed of 14 different subunits. Subunits NuoB, C, D, E, F, and G constitute the peripheral sector of the complex.

The protein localises to the cell inner membrane. The catalysed reaction is a quinone + NADH + 5 H(+)(in) = a quinol + NAD(+) + 4 H(+)(out). NDH-1 shuttles electrons from NADH, via FMN and iron-sulfur (Fe-S) centers, to quinones in the respiratory chain. The immediate electron acceptor for the enzyme in this species is believed to be ubiquinone. Couples the redox reaction to proton translocation (for every two electrons transferred, four hydrogen ions are translocated across the cytoplasmic membrane), and thus conserves the redox energy in a proton gradient. This Ehrlichia ruminantium (strain Gardel) protein is NADH-quinone oxidoreductase subunit D.